Here is a 137-residue protein sequence, read N- to C-terminus: Small ribosomal subunit protein bS6 (137 aa).

A disordered region spans residues 99–137; it reads LSPMKAAESREDRRSGGDDRPRRSADSEERQSASQDEEE. Over residues 105-129 the composition is skewed to basic and acidic residues; the sequence is AESREDRRSGGDDRPRRSADSEERQ.

This sequence belongs to the bacterial ribosomal protein bS6 family.

In terms of biological role, binds together with bS18 to 16S ribosomal RNA. The chain is Small ribosomal subunit protein bS6 from Marinobacter nauticus (strain ATCC 700491 / DSM 11845 / VT8) (Marinobacter aquaeolei).